Here is a 373-residue protein sequence, read N- to C-terminus: Spore germination protein KB (373 aa).

A run of 10 helical transmembrane segments spans residues 11–31 (LFVM…PGSM), 37–57 (WIAV…YQGI), 78–98 (LSWL…ARVL), 105–125 (LLTF…LMVV), 143–163 (LLFG…IVSG), 185–205 (VFTQ…MIFP), 219–239 (IAMA…ISVL), 269–289 (VFFM…YLYA), 306–326 (LAYP…TNFS), and 338–358 (LYIH…VAVW).

Belongs to the amino acid-polyamine-organocation (APC) superfamily. Spore germination protein (SGP) (TC 2.A.3.9) family.

Its subcellular location is the cell membrane. Involved in the germination response to the combination of glucose, fructose, L-asparagine, and KCl. The sequence is that of Spore germination protein KB (gerKB) from Bacillus subtilis (strain 168).